The primary structure comprises 186 residues: Elongation factor P (186 aa).

Belongs to the elongation factor P family.

The protein resides in the cytoplasm. The protein operates within protein biosynthesis; polypeptide chain elongation. Functionally, involved in peptide bond synthesis. Stimulates efficient translation and peptide-bond synthesis on native or reconstituted 70S ribosomes in vitro. Probably functions indirectly by altering the affinity of the ribosome for aminoacyl-tRNA, thus increasing their reactivity as acceptors for peptidyl transferase. The polypeptide is Elongation factor P (Prochlorococcus marinus (strain MIT 9215)).